A 166-amino-acid polypeptide reads, in one-letter code: Regulatory protein RecX (166 aa).

The protein belongs to the RecX family.

It localises to the cytoplasm. Its function is as follows. Modulates RecA activity. This chain is Regulatory protein RecX, found in Shigella boydii serotype 4 (strain Sb227).